The primary structure comprises 685 residues: tRNA 5-methylaminomethyl-2-thiouridine biosynthesis bifunctional protein MnmC (685 aa).

The tract at residues 1–272 (MTAEPNKPCQ…MAAILSSATQ (272 aa)) is tRNA (mnm(5)s(2)U34)-methyltransferase. Residues 278–685 (IGGGLASAHL…LRKLLKGKAL (408 aa)) are FAD-dependent cmnm(5)s(2)U34 oxidoreductase.

In the N-terminal section; belongs to the methyltransferase superfamily. tRNA (mnm(5)s(2)U34)-methyltransferase family. The protein in the C-terminal section; belongs to the DAO family. FAD serves as cofactor.

The protein localises to the cytoplasm. It carries out the reaction 5-aminomethyl-2-thiouridine(34) in tRNA + S-adenosyl-L-methionine = 5-methylaminomethyl-2-thiouridine(34) in tRNA + S-adenosyl-L-homocysteine + H(+). Catalyzes the last two steps in the biosynthesis of 5-methylaminomethyl-2-thiouridine (mnm(5)s(2)U) at the wobble position (U34) in tRNA. Catalyzes the FAD-dependent demodification of cmnm(5)s(2)U34 to nm(5)s(2)U34, followed by the transfer of a methyl group from S-adenosyl-L-methionine to nm(5)s(2)U34, to form mnm(5)s(2)U34. The protein is tRNA 5-methylaminomethyl-2-thiouridine biosynthesis bifunctional protein MnmC of Shewanella baltica (strain OS185).